Consider the following 206-residue polypeptide: Small ribosomal subunit protein uS4 (206 aa).

The segment at 18–46 is disordered; sequence NIWGRPKSPVNRREYGPGQHGQRRKGKIS. Positions 94–154 constitute an S4 RNA-binding domain; it reads RRLDAVVYRA…DRSKQMVALI (61 aa).

This sequence belongs to the universal ribosomal protein uS4 family. In terms of assembly, part of the 30S ribosomal subunit. Contacts protein S5. The interaction surface between S4 and S5 is involved in control of translational fidelity.

Functionally, one of the primary rRNA binding proteins, it binds directly to 16S rRNA where it nucleates assembly of the body of the 30S subunit. With S5 and S12 plays an important role in translational accuracy. The polypeptide is Small ribosomal subunit protein uS4 (Roseobacter denitrificans (strain ATCC 33942 / OCh 114) (Erythrobacter sp. (strain OCh 114))).